A 237-amino-acid polypeptide reads, in one-letter code: UDP-2,3-diacylglucosamine hydrolase (237 aa).

Mn(2+)-binding residues include aspartate 9, histidine 11, aspartate 42, asparagine 80, and histidine 115. Asparagine 80–arginine 81 is a substrate binding site. 5 residues coordinate substrate: aspartate 123, serine 161, lysine 165, lysine 168, and histidine 196. Histidine 196 and histidine 198 together coordinate Mn(2+).

It belongs to the LpxH family. It depends on Mn(2+) as a cofactor.

It localises to the cell inner membrane. It is found in the cytoplasm. It carries out the reaction UDP-2-N,3-O-bis[(3R)-3-hydroxytetradecanoyl]-alpha-D-glucosamine + H2O = 2-N,3-O-bis[(3R)-3-hydroxytetradecanoyl]-alpha-D-glucosaminyl 1-phosphate + UMP + 2 H(+). It functions in the pathway glycolipid biosynthesis; lipid IV(A) biosynthesis; lipid IV(A) from (3R)-3-hydroxytetradecanoyl-[acyl-carrier-protein] and UDP-N-acetyl-alpha-D-glucosamine: step 4/6. Hydrolyzes the pyrophosphate bond of UDP-2,3-diacylglucosamine to yield 2,3-diacylglucosamine 1-phosphate (lipid X) and UMP by catalyzing the attack of water at the alpha-P atom. Involved in the biosynthesis of lipid A, a phosphorylated glycolipid that anchors the lipopolysaccharide to the outer membrane of the cell. In Haemophilus influenzae (strain ATCC 51907 / DSM 11121 / KW20 / Rd), this protein is UDP-2,3-diacylglucosamine hydrolase.